Reading from the N-terminus, the 295-residue chain is Bifunctional protein FolD (295 aa).

Residues 165–167, serine 190, and isoleucine 231 contribute to the NADP(+) site; that span reads GRS.

Belongs to the tetrahydrofolate dehydrogenase/cyclohydrolase family. In terms of assembly, homodimer.

The enzyme catalyses (6R)-5,10-methylene-5,6,7,8-tetrahydrofolate + NADP(+) = (6R)-5,10-methenyltetrahydrofolate + NADPH. The catalysed reaction is (6R)-5,10-methenyltetrahydrofolate + H2O = (6R)-10-formyltetrahydrofolate + H(+). The protein operates within one-carbon metabolism; tetrahydrofolate interconversion. Its function is as follows. Catalyzes the oxidation of 5,10-methylenetetrahydrofolate to 5,10-methenyltetrahydrofolate and then the hydrolysis of 5,10-methenyltetrahydrofolate to 10-formyltetrahydrofolate. The chain is Bifunctional protein FolD from Nitrosomonas eutropha (strain DSM 101675 / C91 / Nm57).